Consider the following 153-residue polypeptide: UPF0311 protein Rpal_1987 (153 aa).

It belongs to the UPF0311 family.

The protein is UPF0311 protein Rpal_1987 of Rhodopseudomonas palustris (strain TIE-1).